We begin with the raw amino-acid sequence, 24 residues long: Humanin-like 9 (24 aa).

This sequence belongs to the humanin family. As to expression, highly expressed in the kidney, heart muscle and testis.

The protein resides in the secreted. It is found in the cytoplasm. Its function is as follows. Plays a role as a neuroprotective and antiapoptotic factor. The polypeptide is Humanin-like 9 (Homo sapiens (Human)).